The primary structure comprises 122 residues: UPF0102 protein CPE1705 (122 aa).

This sequence belongs to the UPF0102 family.

This Clostridium perfringens (strain 13 / Type A) protein is UPF0102 protein CPE1705.